A 227-amino-acid polypeptide reads, in one-letter code: DNA repair protein RecO (227 aa).

This sequence belongs to the RecO family.

Involved in DNA repair and RecF pathway recombination. The chain is DNA repair protein RecO from Pseudomonas savastanoi pv. phaseolicola (strain 1448A / Race 6) (Pseudomonas syringae pv. phaseolicola (strain 1448A / Race 6)).